The primary structure comprises 206 residues: MARYRGPVGKVSRRLGIGITDKGQRILAKRPFPPGQHGPSARRRQVSDYGLQLLEKQKARYVYGVLERQFRRIFEKAQRFPGETGAYLFILLERRLDNVVYRLGFATTRAQARQLVSHGHITVNGRKTNIPSYTVRVGETIAVRPESRRRTYFKNLIDSGALARHKTPDWLRLNPADLSGEVVAMPRREDAEPGINEQLIVEFYSR.

In terms of domain architecture, S4 RNA-binding spans 94–157; sequence RRLDNVVYRL…RRRTYFKNLI (64 aa).

The protein belongs to the universal ribosomal protein uS4 family. As to quaternary structure, part of the 30S ribosomal subunit. Contacts protein S5. The interaction surface between S4 and S5 is involved in control of translational fidelity.

In terms of biological role, one of the primary rRNA binding proteins, it binds directly to 16S rRNA where it nucleates assembly of the body of the 30S subunit. Functionally, with S5 and S12 plays an important role in translational accuracy. This Roseiflexus sp. (strain RS-1) protein is Small ribosomal subunit protein uS4.